Reading from the N-terminus, the 107-residue chain is Putative antitoxin VapB5 (107 aa).

2 consecutive transmembrane segments (helical) span residues 3 to 23 and 65 to 85; these read GPVI…ILLA and LIIL…AYLY.

It localises to the cell membrane. Possibly the antitoxin component of a type II toxin-antitoxin (TA) system. Its cognate toxin is VapC5 (Potential). The chain is Putative antitoxin VapB5 (vapB5) from Methanocaldococcus jannaschii (strain ATCC 43067 / DSM 2661 / JAL-1 / JCM 10045 / NBRC 100440) (Methanococcus jannaschii).